A 314-amino-acid polypeptide reads, in one-letter code: Lysophospholipase D GDPD1 (314 aa).

Residues 1–3 lie on the Extracellular side of the membrane; that stretch reads MSS. The helical transmembrane segment at 4–24 threads the bilayer; it reads TAAFCLLSTLGGYLVTSFLLL. The Cytoplasmic portion of the chain corresponds to 25–195; sequence KYPALLHQRK…VDKCYKENSD (171 aa). One can recognise a GP-PDE domain in the interval 40 to 309; the sequence is SRHISHRGGA…DYPTKLKDFL (270 aa). 3 residues coordinate a divalent metal cation: glutamate 72, aspartate 74, and histidine 87. A helical membrane pass occupies residues 196–216; the sequence is IPILFSLQRVLLILGLFFTGL. At 217-314 the chain is on the extracellular side; that stretch reads LPFVPIREQF…LKDFLNNFSA (98 aa).

Belongs to the glycerophosphoryl diester phosphodiesterase family. In terms of tissue distribution, widely expressed.

It is found in the cytoplasm. It localises to the membrane. The protein resides in the perinuclear region. The protein localises to the endoplasmic reticulum. It carries out the reaction 1-hexadecanoyl-sn-glycero-3-phosphocholine + H2O = 1-hexadecanoyl-sn-glycero-3-phosphate + choline + H(+). It catalyses the reaction 1-hexadecanoyl-sn-glycero-3-phosphoethanolamine + H2O = 1-hexadecanoyl-sn-glycero-3-phosphate + ethanolamine + H(+). The catalysed reaction is N-hexadecanoyl-sn-glycero-3-phosphoethanolamine + H2O = N-hexadecanoylethanolamine + sn-glycerol 3-phosphate + H(+). The enzyme catalyses N-(5Z,8Z,11Z,14Z-eicosatetraenoyl)-1-(9Z-octadecenoyl)-sn-glycero-3-phosphoethanolamine + H2O = N-(5Z,8Z,11Z,14Z-eicosatetraenoyl)-ethanolamine + 1-(9Z-octadecenoyl)-sn-glycero-3-phosphate + H(+). It carries out the reaction N,1-di-(9Z-octadecenoyl)-sn-glycero-3-phosphoethanolamine + H2O = N-(9Z-octadecenoyl) ethanolamine + 1-(9Z-octadecenoyl)-sn-glycero-3-phosphate + H(+). It catalyses the reaction N-hexadecanoyl-1-(9Z-octadecenoyl)-sn-glycero-3-phosphoethanolamine + H2O = N-hexadecanoylethanolamine + 1-(9Z-octadecenoyl)-sn-glycero-3-phosphate + H(+). The catalysed reaction is a 1-O-alkyl-sn-glycero-3-phosphocholine + H2O = a 1-O-alkyl-sn-glycero-3-phosphate + choline + H(+). The enzyme catalyses 1-O-hexadecyl-sn-glycero-3-phosphocholine + H2O = 1-O-hexadecyl-sn-glycero-3-phosphate + choline + H(+). It carries out the reaction 1-(9Z-octadecenoyl)-sn-glycero-3-phosphocholine + H2O = 1-(9Z-octadecenoyl)-sn-glycero-3-phosphate + choline + H(+). It catalyses the reaction N,1-dihexadecanoyl-sn-glycero-3-phosphoethanolamine + H2O = N-hexadecanoylethanolamine + 1-hexadecanoyl-sn-glycero-3-phosphate + H(+). The catalysed reaction is 1-O-(1Z-octadecenyl)-sn-glycero-3-phospho-(N-5Z,8Z,11Z,14Z-eicosatetraenoyl)-ethanolamine + H2O = 1-O-(1Z-octadecenyl)-sn-glycero-3-phosphate + N-(5Z,8Z,11Z,14Z-eicosatetraenoyl)-ethanolamine + H(+). The enzyme catalyses 1-O-(1Z-octadecenyl)-sn-glycero-3-phospho-(N-9Z-octadecenoyl)-ethanolamine + H2O = 1-O-(1Z-octadecenyl)-sn-glycero-3-phosphate + N-(9Z-octadecenoyl) ethanolamine + H(+). It carries out the reaction 1-O-(1Z-octadecenyl)-sn-glycero-3-phospho-N-hexadecanoyl-ethanolamine + H2O = 1-O-(1Z-octadecenyl)-sn-glycero-3-phosphate + N-hexadecanoylethanolamine + H(+). With respect to regulation, lysophospholipase D activity is increased by magnesium and manganese and inhibited by calcium in a concentration dependent manner. Loss of lysophospholipase D activity by addition of EDTA. Functionally, hydrolyzes lysoglycerophospholipids to produce lysophosphatidic acid (LPA) and the corresponding amines. Shows a preference for 1-O-alkyl-sn-glycero-3-phosphocholine (lyso-PAF), lysophosphatidylethanolamine (lyso-PE) and lysophosphatidylcholine (lyso-PC). May be involved in bioactive N-acylethanolamine biosynthesis from both N-acyl-lysoplasmenylethanolamin (N-acyl-lysoPlsEt) and N-acyl-lysophosphatidylethanolamin (N-acyl-lysoPE). In addition, hydrolyzes glycerophospho-N-acylethanolamine to N-acylethanolamine. Does not display glycerophosphodiester phosphodiesterase activity, since it cannot hydrolyze either glycerophosphoinositol or glycerophosphocholine. This is Lysophospholipase D GDPD1 from Mus musculus (Mouse).